A 230-amino-acid chain; its full sequence is Ribosomal RNA small subunit methyltransferase G (230 aa).

S-adenosyl-L-methionine-binding positions include Gly-95, Phe-100, 146 to 147, and Arg-159; that span reads GE.

The protein belongs to the methyltransferase superfamily. RNA methyltransferase RsmG family.

It is found in the cytoplasm. Specifically methylates the N7 position of a guanine in 16S rRNA. The sequence is that of Ribosomal RNA small subunit methyltransferase G from Parabacteroides distasonis (strain ATCC 8503 / DSM 20701 / CIP 104284 / JCM 5825 / NCTC 11152).